A 670-amino-acid polypeptide reads, in one-letter code: DNA ligase (670 aa).

NAD(+) is bound by residues 33–37 (DAEYD), 82–83 (SL), and Glu114. Catalysis depends on Lys116, which acts as the N6-AMP-lysine intermediate. NAD(+) contacts are provided by Arg137, Glu174, Lys291, and Lys315. Zn(2+) is bound by residues Cys409, Cys412, Cys427, and Cys433. Residues 593–670 (GAELPLEGKT…TEQDLLELIN (78 aa)) enclose the BRCT domain.

This sequence belongs to the NAD-dependent DNA ligase family. LigA subfamily. Mg(2+) is required as a cofactor. The cofactor is Mn(2+).

It catalyses the reaction NAD(+) + (deoxyribonucleotide)n-3'-hydroxyl + 5'-phospho-(deoxyribonucleotide)m = (deoxyribonucleotide)n+m + AMP + beta-nicotinamide D-nucleotide.. Functionally, DNA ligase that catalyzes the formation of phosphodiester linkages between 5'-phosphoryl and 3'-hydroxyl groups in double-stranded DNA using NAD as a coenzyme and as the energy source for the reaction. It is essential for DNA replication and repair of damaged DNA. The polypeptide is DNA ligase (Vibrio parahaemolyticus serotype O3:K6 (strain RIMD 2210633)).